A 218-amino-acid polypeptide reads, in one-letter code: Peptide methionine sulfoxide reductase MsrA (218 aa).

Cysteine 54 is an active-site residue.

This sequence belongs to the MsrA Met sulfoxide reductase family.

It catalyses the reaction L-methionyl-[protein] + [thioredoxin]-disulfide + H2O = L-methionyl-(S)-S-oxide-[protein] + [thioredoxin]-dithiol. The catalysed reaction is [thioredoxin]-disulfide + L-methionine + H2O = L-methionine (S)-S-oxide + [thioredoxin]-dithiol. Its function is as follows. Has an important function as a repair enzyme for proteins that have been inactivated by oxidation. Catalyzes the reversible oxidation-reduction of methionine sulfoxide in proteins to methionine. This chain is Peptide methionine sulfoxide reductase MsrA, found in Azorhizobium caulinodans (strain ATCC 43989 / DSM 5975 / JCM 20966 / LMG 6465 / NBRC 14845 / NCIMB 13405 / ORS 571).